The following is a 225-amino-acid chain: Uracil-DNA glycosylase (225 aa).

The active-site Proton acceptor is the aspartate 65.

The protein belongs to the uracil-DNA glycosylase (UDG) superfamily. UNG family.

The protein localises to the cytoplasm. The catalysed reaction is Hydrolyzes single-stranded DNA or mismatched double-stranded DNA and polynucleotides, releasing free uracil.. In terms of biological role, excises uracil residues from the DNA which can arise as a result of misincorporation of dUMP residues by DNA polymerase or due to deamination of cytosine. This is Uracil-DNA glycosylase from Bacillus cereus (strain G9842).